The following is a 237-amino-acid chain: Ribosomal RNA small subunit methyltransferase G (237 aa).

S-adenosyl-L-methionine contacts are provided by residues Gly78, Phe83, 129–130, and Arg148; that span reads AE.

This sequence belongs to the methyltransferase superfamily. RNA methyltransferase RsmG family.

It is found in the cytoplasm. Specifically methylates the N7 position of a guanine in 16S rRNA. This is Ribosomal RNA small subunit methyltransferase G from Streptococcus pyogenes serotype M6 (strain ATCC BAA-946 / MGAS10394).